Reading from the N-terminus, the 555-residue chain is MKSDIEIAQEAKMLHIREVAKKLDIEEDYLEYYGKYKAKISPALSEKIKDRKDGKLILVTAITPTPAGEGKTTLTVGLGQALAKIGKKAMIALREPSLGPCMGIKGGAAGGGYSQVVPMEDINLHFTGDLHAITAAHNLLAAMIDNHIHHGNELNIDIRAITWKRAMDMNDRALREIIVGLGGKANGFPRQDGFIITVASEVMAILCLAQDLMDLKRRIGDIIVAYDKDGNPVTARDLKADGAMTVLLKDAIKPNLVQTIENVPAFVHGGPFANIAHGCNSLIATKYGLKLADYLVTEAGFGADLGAEKFFDIKSRFGGLTPNAAVIVATVKALKMHGGVKKEHLQKEDVEAVRRGIENLEKQVENVRKFGVPVVVALNRFVFDTEREIEEVRKACEEMGVDMAVAEVWEKGGEGGIELAEKVVKACETPSNFHVLYDETLPIKDKLHIIATEIYGADGVEYTASALKDIANLERLGFDKMPIVVAKTQYSLSDDPKLLGRPRGFKITVRELRVSRGAGFIVALTGDIMTMPGLPKHPAAENIDIDENGRITGLF.

Residue 65–72 (TPAGEGKT) participates in ATP binding.

This sequence belongs to the formate--tetrahydrofolate ligase family.

The catalysed reaction is (6S)-5,6,7,8-tetrahydrofolate + formate + ATP = (6R)-10-formyltetrahydrofolate + ADP + phosphate. Its pathway is one-carbon metabolism; tetrahydrofolate interconversion. The sequence is that of Formate--tetrahydrofolate ligase from Thermoanaerobacter pseudethanolicus (strain ATCC 33223 / 39E) (Clostridium thermohydrosulfuricum).